Reading from the N-terminus, the 272-residue chain is 5'-nucleotidase SurE (272 aa).

A divalent metal cation is bound by residues aspartate 8, aspartate 9, serine 39, and asparagine 96.

It belongs to the SurE nucleotidase family. The cofactor is a divalent metal cation.

It localises to the cytoplasm. It catalyses the reaction a ribonucleoside 5'-phosphate + H2O = a ribonucleoside + phosphate. Functionally, nucleotidase that shows phosphatase activity on nucleoside 5'-monophosphates. This Heliobacterium modesticaldum (strain ATCC 51547 / Ice1) protein is 5'-nucleotidase SurE.